We begin with the raw amino-acid sequence, 332 residues long: MNPLIFKGNRPFDLIAVGRLCVDLNANETQRPMEETRTFTKYVGGSPANIAIGAARLGLQTGFIGKVSDDQMGRFITGYLKDNKINTDQIPIDCTGAVTGLAFTEIKSPEDCSILMYRDNVADLNLDPTEVSEDYIKQSKALLISGTALAKSPSREAVFLALEYARKHDVVVFFDVDYRPYTWQSEAETAVYYNLAAEKSDVIIGTREEFDMMEKLLNYEKSNDQVTAERWFSHHAKIVVIKHGGDGSIAYTRDGQSHRGGIFKTKVLKTFGAGDSYASAFIYGLMQGLEIPQAMRLGGASASIVISKHSCSDAMPTRAEISAFMETAEELV.

Belongs to the carbohydrate kinase PfkB family.

It catalyses the reaction 5-dehydro-2-deoxy-D-gluconate + ATP = 6-phospho-5-dehydro-2-deoxy-D-gluconate + ADP + H(+). The protein operates within polyol metabolism; myo-inositol degradation into acetyl-CoA; acetyl-CoA from myo-inositol: step 5/7. In terms of biological role, catalyzes the phosphorylation of 5-dehydro-2-deoxy-D-gluconate (2-deoxy-5-keto-D-gluconate or DKG) to 6-phospho-5-dehydro-2-deoxy-D-gluconate (DKGP). The protein is 5-dehydro-2-deoxygluconokinase of Bacillus thuringiensis subsp. konkukian (strain 97-27).